Reading from the N-terminus, the 270-residue chain is NAD kinase (270 aa).

Aspartate 45 functions as the Proton acceptor in the catalytic mechanism. Residues 45–46 (DG), 121–122 (NE), arginine 147, aspartate 149, 160–165 (TAYSKS), and alanine 184 each bind NAD(+).

It belongs to the NAD kinase family. A divalent metal cation is required as a cofactor.

Its subcellular location is the cytoplasm. The catalysed reaction is NAD(+) + ATP = ADP + NADP(+) + H(+). Functionally, involved in the regulation of the intracellular balance of NAD and NADP, and is a key enzyme in the biosynthesis of NADP. Catalyzes specifically the phosphorylation on 2'-hydroxyl of the adenosine moiety of NAD to yield NADP. The sequence is that of NAD kinase from Lactobacillus helveticus (strain DPC 4571).